A 181-amino-acid polypeptide reads, in one-letter code: 6,7-dimethyl-8-ribityllumazine synthase (181 aa).

Residues tyrosine 30, 61 to 63 (ALE), and 87 to 89 (CII) each bind 5-amino-6-(D-ribitylamino)uracil. Residue 92 to 93 (ET) coordinates (2S)-2-hydroxy-3-oxobutyl phosphate. The active-site Proton donor is the histidine 95. Residue asparagine 120 participates in 5-amino-6-(D-ribitylamino)uracil binding. Position 134 (arginine 134) interacts with (2S)-2-hydroxy-3-oxobutyl phosphate.

Belongs to the DMRL synthase family.

The enzyme catalyses (2S)-2-hydroxy-3-oxobutyl phosphate + 5-amino-6-(D-ribitylamino)uracil = 6,7-dimethyl-8-(1-D-ribityl)lumazine + phosphate + 2 H2O + H(+). It functions in the pathway cofactor biosynthesis; riboflavin biosynthesis; riboflavin from 2-hydroxy-3-oxobutyl phosphate and 5-amino-6-(D-ribitylamino)uracil: step 1/2. In terms of biological role, catalyzes the formation of 6,7-dimethyl-8-ribityllumazine by condensation of 5-amino-6-(D-ribitylamino)uracil with 3,4-dihydroxy-2-butanone 4-phosphate. This is the penultimate step in the biosynthesis of riboflavin. This chain is 6,7-dimethyl-8-ribityllumazine synthase, found in Beijerinckia indica subsp. indica (strain ATCC 9039 / DSM 1715 / NCIMB 8712).